We begin with the raw amino-acid sequence, 452 residues long: GTPase Der (452 aa).

EngA-type G domains follow at residues 4–169 (PIVA…PTTE) and 177–352 (IKVA…ASHR). Residues 10 to 17 (GRPNVGKS), 57 to 61 (DTGGL), 120 to 123 (NKCE), 183 to 190 (GRPNVGKS), 230 to 234 (DTAGI), and 295 to 298 (NKWD) each bind GTP. Residues 353 to 438 (RRVSTAVINE…PIRLIWRGKS (86 aa)) enclose the KH-like domain.

The protein belongs to the TRAFAC class TrmE-Era-EngA-EngB-Septin-like GTPase superfamily. EngA (Der) GTPase family. In terms of assembly, associates with the 50S ribosomal subunit.

GTPase that plays an essential role in the late steps of ribosome biogenesis. The polypeptide is GTPase Der (Gloeothece citriformis (strain PCC 7424) (Cyanothece sp. (strain PCC 7424))).